A 336-amino-acid polypeptide reads, in one-letter code: NADH-quinone oxidoreductase subunit H (336 aa).

8 consecutive transmembrane segments (helical) span residues 12–32, 84–104, 118–138, 156–176, 193–213, 247–267, 274–294, and 313–333; these read FLKI…LTWF, VVMA…GPGF, VNIA…GTIF, AAVV…VILL, GVWF…CMLA, LAEW…LFFG, IFGP…LVFF, and IAWK…AVVV.

It belongs to the complex I subunit 1 family. In terms of assembly, NDH-1 is composed of 14 different subunits. Subunits NuoA, H, J, K, L, M, N constitute the membrane sector of the complex.

The protein localises to the cell inner membrane. The enzyme catalyses a quinone + NADH + 5 H(+)(in) = a quinol + NAD(+) + 4 H(+)(out). Functionally, NDH-1 shuttles electrons from NADH, via FMN and iron-sulfur (Fe-S) centers, to quinones in the respiratory chain. The immediate electron acceptor for the enzyme in this species is believed to be ubiquinone. Couples the redox reaction to proton translocation (for every two electrons transferred, four hydrogen ions are translocated across the cytoplasmic membrane), and thus conserves the redox energy in a proton gradient. This subunit may bind ubiquinone. The protein is NADH-quinone oxidoreductase subunit H of Aquifex aeolicus (strain VF5).